The sequence spans 460 residues: DNA repair protein RadA (460 aa).

The C4-type zinc-finger motif lies at 11–28 (CNECGADYPRWQGQCSAC). Position 102 to 109 (102 to 109 (GNPGAGKS)) interacts with ATP. Residues 258 to 262 (KNRFG) carry the RadA KNRFG motif motif. Residues 357–460 (DVFVNVVGGV…ADALSVFDDL (104 aa)) are lon-protease-like.

Belongs to the RecA family. RadA subfamily.

Functionally, DNA-dependent ATPase involved in processing of recombination intermediates, plays a role in repairing DNA breaks. Stimulates the branch migration of RecA-mediated strand transfer reactions, allowing the 3' invading strand to extend heteroduplex DNA faster. Binds ssDNA in the presence of ADP but not other nucleotides, has ATPase activity that is stimulated by ssDNA and various branched DNA structures, but inhibited by SSB. Does not have RecA's homology-searching function. The polypeptide is DNA repair protein RadA (Salmonella typhimurium (strain LT2 / SGSC1412 / ATCC 700720)).